Consider the following 742-residue polypeptide: 2'-5'-oligoadenylate synthase 2 (742 aa).

Positions 1–35 are disordered; that stretch reads MGNWLTGNWSSDRSSGYSSGWSPGGSSGVPSGPVH. A lipid anchor (N-myristoyl glycine) is attached at G2. Positions 10–21 are enriched in low complexity; the sequence is SSDRSSGYSSGW. 2 OAS domain regions span residues 60–374 and 382–721; these read VPSQ…YWDV and TPSH…WKVP. Residue K417 is modified to N6-acetyllysine. ATP is bound at residue S436. D448, D450, and D519 together coordinate Mg(2+). 2 residues coordinate ATP: R582 and K585.

This sequence belongs to the 2-5A synthase family. In terms of assembly, homodimer. Requires Mg(2+) as cofactor. In terms of processing, myristoylation is not essential for its activity. Post-translationally, glycosylated. Glycosylation is essential for its activity. Expressed in the uterus. Expressed in mammary glands: expressed at low level before the establishment of lactation, then expression strongly increases, and subsequently decreases during early involution.

It localises to the cytoplasm. Its subcellular location is the perinuclear region. It carries out the reaction 3 ATP = 5'-triphosphoadenylyl-(2'-&gt;5')-adenylyl-(2'-&gt;5')-adenosine + 2 diphosphate. Produced as a latent enzyme which is activated by double stranded RNA (dsRNA) generated during the course of viral infection. The dsRNA activator must be at least 15 nucleotides long, and no modification of the 2'-hydroxyl group is tolerated. ssRNA or dsDNA do not act as activators. Strongly inhibited by copper, iron and zinc ions. Partially inhibited by cobalt and nickel ions. Functionally, interferon-induced, dsRNA-activated antiviral enzyme which plays a critical role in cellular innate antiviral response. Activated by detection of double stranded RNA (dsRNA): polymerizes higher oligomers of 2'-5'-oligoadenylates (2-5A) from ATP which then bind to the inactive monomeric form of ribonuclease L (RNASEL) leading to its dimerization and subsequent activation. Activation of RNASEL leads to degradation of cellular as well as viral RNA, resulting in the inhibition of protein synthesis, thus terminating viral replication. Can mediate the antiviral effect via the classical RNASEL-dependent pathway or an alternative antiviral pathway independent of RNASEL. In addition, it may also play a role in other cellular processes such as apoptosis, cell growth, differentiation and gene regulation. May act as a negative regulator of lactation, stopping lactation in virally infected mammary gland lobules, thereby preventing transmission of viruses to neonates. Non-infected lobules would not be affected, allowing efficient pup feeding during infection. In Mus musculus (Mouse), this protein is 2'-5'-oligoadenylate synthase 2.